Consider the following 316-residue polypeptide: Thymidylate synthase (316 aa).

DUMP contacts are provided by residues R23 and 178–179 (RR). C198 serves as the catalytic Nucleophile. DUMP is bound by residues 218 to 221 (RSAD), N229, and 259 to 261 (HLY). Position 221 (D221) interacts with (6R)-5,10-methylene-5,6,7,8-tetrahydrofolate. (6R)-5,10-methylene-5,6,7,8-tetrahydrofolate is bound at residue A315.

It belongs to the thymidylate synthase family. Bacterial-type ThyA subfamily. As to quaternary structure, homodimer.

The protein resides in the cytoplasm. The catalysed reaction is dUMP + (6R)-5,10-methylene-5,6,7,8-tetrahydrofolate = 7,8-dihydrofolate + dTMP. The protein operates within pyrimidine metabolism; dTTP biosynthesis. In terms of biological role, catalyzes the reductive methylation of 2'-deoxyuridine-5'-monophosphate (dUMP) to 2'-deoxythymidine-5'-monophosphate (dTMP) while utilizing 5,10-methylenetetrahydrofolate (mTHF) as the methyl donor and reductant in the reaction, yielding dihydrofolate (DHF) as a by-product. This enzymatic reaction provides an intracellular de novo source of dTMP, an essential precursor for DNA biosynthesis. This is Thymidylate synthase from Lacticaseibacillus casei (Lactobacillus casei).